Reading from the N-terminus, the 264-residue chain is Acyl-[acyl-carrier-protein]--UDP-N-acetylglucosamine O-acyltransferase (264 aa).

This sequence belongs to the transferase hexapeptide repeat family. LpxA subfamily. Homotrimer.

It localises to the cytoplasm. The enzyme catalyses a (3R)-hydroxyacyl-[ACP] + UDP-N-acetyl-alpha-D-glucosamine = a UDP-3-O-[(3R)-3-hydroxyacyl]-N-acetyl-alpha-D-glucosamine + holo-[ACP]. It participates in glycolipid biosynthesis; lipid IV(A) biosynthesis; lipid IV(A) from (3R)-3-hydroxytetradecanoyl-[acyl-carrier-protein] and UDP-N-acetyl-alpha-D-glucosamine: step 1/6. Its function is as follows. Involved in the biosynthesis of lipid A, a phosphorylated glycolipid that anchors the lipopolysaccharide to the outer membrane of the cell. In Rickettsia conorii (strain ATCC VR-613 / Malish 7), this protein is Acyl-[acyl-carrier-protein]--UDP-N-acetylglucosamine O-acyltransferase.